A 421-amino-acid polypeptide reads, in one-letter code: Gamma-glutamyl phosphate reductase (421 aa).

It belongs to the gamma-glutamyl phosphate reductase family.

The protein localises to the cytoplasm. It carries out the reaction L-glutamate 5-semialdehyde + phosphate + NADP(+) = L-glutamyl 5-phosphate + NADPH + H(+). The protein operates within amino-acid biosynthesis; L-proline biosynthesis; L-glutamate 5-semialdehyde from L-glutamate: step 2/2. Catalyzes the NADPH-dependent reduction of L-glutamate 5-phosphate into L-glutamate 5-semialdehyde and phosphate. The product spontaneously undergoes cyclization to form 1-pyrroline-5-carboxylate. In Acinetobacter baumannii (strain SDF), this protein is Gamma-glutamyl phosphate reductase.